A 71-amino-acid polypeptide reads, in one-letter code: Small ribosomal subunit protein bS21 (71 aa).

It belongs to the bacterial ribosomal protein bS21 family.

The chain is Small ribosomal subunit protein bS21 from Cellvibrio japonicus (strain Ueda107) (Pseudomonas fluorescens subsp. cellulosa).